Consider the following 467-residue polypeptide: Xanthan biosynthesis protein XanB (467 aa).

This sequence belongs to the mannose-6-phosphate isomerase type 2 family.

The catalysed reaction is D-mannose 6-phosphate = D-fructose 6-phosphate. It catalyses the reaction alpha-D-mannose 1-phosphate + GTP + H(+) = GDP-alpha-D-mannose + diphosphate. The protein operates within nucleotide-sugar biosynthesis; GDP-alpha-D-mannose biosynthesis; GDP-alpha-D-mannose from alpha-D-mannose 1-phosphate (GTP route): step 1/1. It participates in nucleotide-sugar biosynthesis; GDP-alpha-D-mannose biosynthesis; alpha-D-mannose 1-phosphate from D-fructose 6-phosphate: step 1/2. In terms of biological role, involved in xanthan production. The protein is Xanthan biosynthesis protein XanB (xanB) of Xanthomonas campestris pv. campestris (strain ATCC 33913 / DSM 3586 / NCPPB 528 / LMG 568 / P 25).